The chain runs to 494 residues: UDP-glucose 6-dehydrogenase (494 aa).

NAD(+) contacts are provided by residues 11-16, D36, R41, and 89-93; these read GAGYVG and VNTPT. Positions 88–110 are disordered; sequence SVNTPTKTYGMGKGRAADLKYIE. The residue at position 107 (K107) is an N6-acetyllysine. Residues 129 to 135 form an allosteric switch region region; that stretch reads KSTVPVR. Residue 130–132 participates in NAD(+) binding; it reads STV. E161 functions as the Proton donor/acceptor in the catalytic mechanism. Residues 161-165, 220-224, R260, and 267-273 each bind substrate; these read EFLAE, KLAAN, and KASVGFG. NAD(+) is bound at residue E165. The Proton donor/acceptor role is filled by K220. C276 serves as the catalytic Nucleophile. NAD(+) is bound at residue 276-279; it reads CFQK. An important for formation of active hexamer structure region spans residues 321-325; it reads SLFNT. 338–339 is a binding site for substrate; sequence FK. R346 lines the NAD(+) pocket. R442 is a substrate binding site. Residues 466–494 form a disordered region; the sequence is VSSKRIPYAPSGEIPKFSLQDPPNKKPKV. The residue at position 476 (S476) is a Phosphoserine.

It belongs to the UDP-glucose/GDP-mannose dehydrogenase family. In terms of assembly, homohexamer.

It catalyses the reaction UDP-alpha-D-glucose + 2 NAD(+) + H2O = UDP-alpha-D-glucuronate + 2 NADH + 3 H(+). It participates in nucleotide-sugar biosynthesis; UDP-alpha-D-glucuronate biosynthesis; UDP-alpha-D-glucuronate from UDP-alpha-D-glucose: step 1/1. Its activity is regulated as follows. UDP-alpha-D-xylose (UDX) acts as a feedback inhibitor. It binds at the same site as the substrate, but functions as allosteric inhibitor by triggering a conformation change that disrupts the active hexameric ring structure and gives rise to an inactive, horseshoe-shaped hexamer. Functionally, catalyzes the formation of UDP-alpha-D-glucuronate, a constituent of complex glycosaminoglycans. Required for the biosynthesis of chondroitin sulfate and heparan sulfate. Required for embryonic development via its role in the biosynthesis of glycosaminoglycans. Required for proper brain and neuronal development. In Pongo abelii (Sumatran orangutan), this protein is UDP-glucose 6-dehydrogenase (UGDH).